The primary structure comprises 504 residues: Cytochrome P450 71B4 (504 aa).

A helical membrane pass occupies residues 1–21 (MVSLLSFFLLLLVPIFFLLIF). C446 provides a ligand contact to heme.

This sequence belongs to the cytochrome P450 family. It depends on heme as a cofactor.

It is found in the membrane. The sequence is that of Cytochrome P450 71B4 (CYP71B4) from Arabidopsis thaliana (Mouse-ear cress).